Here is a 413-residue protein sequence, read N- to C-terminus: O-methyltransferase kntB (413 aa).

Residues 255–256, Asp280, 302–303, and Arg319 contribute to the S-adenosyl-L-methionine site; these read GG and NF. The active-site Proton acceptor is His322.

The protein belongs to the class I-like SAM-binding methyltransferase superfamily. Cation-independent O-methyltransferase family. It depends on S-adenosyl-L-methionine as a cofactor.

It participates in secondary metabolite biosynthesis. Non-reducing polyketide synthase; part of the gene cluster that mediates the biosynthesis of the bicoumarin kotanin. The non-reducing polyketide synthase ktnS first catalyzes the formation of the pentaketidic 4,7-dihydroxy-5-methylcoumarin from acetyl coenzyme A and 4 malonyl coenzyme A molecules. Further O-methylation by ktnB leads to the formation of 7-demethylsiderin. Then, an oxidative phenol coupling catalyzed by the cytochrome P450 monooxygenase ktnC forms the 8,8'-dimer P-orlandin via dimerization the monomeric precursor, 7-demethylsiderin. P-orlandin is subsequently O-methylated in a stepwise fashion to demethylkotanin and kotanin. The sequence is that of O-methyltransferase kntB from Aspergillus niger (strain ATCC MYA-4892 / CBS 513.88 / FGSC A1513).